Reading from the N-terminus, the 257-residue chain is Imidazole glycerol phosphate synthase subunit HisF (257 aa).

Catalysis depends on residues D11 and D130.

The protein belongs to the HisA/HisF family. As to quaternary structure, heterodimer of HisH and HisF.

It localises to the cytoplasm. It catalyses the reaction 5-[(5-phospho-1-deoxy-D-ribulos-1-ylimino)methylamino]-1-(5-phospho-beta-D-ribosyl)imidazole-4-carboxamide + L-glutamine = D-erythro-1-(imidazol-4-yl)glycerol 3-phosphate + 5-amino-1-(5-phospho-beta-D-ribosyl)imidazole-4-carboxamide + L-glutamate + H(+). Its pathway is amino-acid biosynthesis; L-histidine biosynthesis; L-histidine from 5-phospho-alpha-D-ribose 1-diphosphate: step 5/9. Its function is as follows. IGPS catalyzes the conversion of PRFAR and glutamine to IGP, AICAR and glutamate. The HisF subunit catalyzes the cyclization activity that produces IGP and AICAR from PRFAR using the ammonia provided by the HisH subunit. The protein is Imidazole glycerol phosphate synthase subunit HisF of Trichormus variabilis (strain ATCC 29413 / PCC 7937) (Anabaena variabilis).